The following is a 64-amino-acid chain: Beta sliding clamp (64 aa).

Belongs to the beta sliding clamp family. In terms of assembly, forms a ring-shaped head-to-tail homodimer around DNA which binds and tethers DNA polymerases and other proteins to the DNA. The DNA replisome complex has a single clamp-loading complex (3 tau and 1 each of delta, delta', psi and chi subunits) which binds 3 Pol III cores (1 core on the leading strand and 2 on the lagging strand) each with a beta sliding clamp dimer. Additional proteins in the replisome are other copies of gamma, psi and chi, Ssb, DNA helicase and RNA primase.

Its subcellular location is the cytoplasm. In terms of biological role, confers DNA tethering and processivity to DNA polymerases and other proteins. Acts as a clamp, forming a ring around DNA (a reaction catalyzed by the clamp-loading complex) which diffuses in an ATP-independent manner freely and bidirectionally along dsDNA. Initially characterized for its ability to contact the catalytic subunit of DNA polymerase III (Pol III), a complex, multichain enzyme responsible for most of the replicative synthesis in bacteria; Pol III exhibits 3'-5' exonuclease proofreading activity. The beta chain is required for initiation of replication as well as for processivity of DNA replication. This Actinobacillus pleuropneumoniae (Haemophilus pleuropneumoniae) protein is Beta sliding clamp (dnaN).